We begin with the raw amino-acid sequence, 311 residues long: tRNA-cytidine(32) 2-sulfurtransferase (311 aa).

The short motif at 47-52 is the PP-loop motif element; that stretch reads SGGKDS. [4Fe-4S] cluster is bound by residues Cys-122, Cys-125, and Cys-213.

Belongs to the TtcA family. In terms of assembly, homodimer. Requires Mg(2+) as cofactor. [4Fe-4S] cluster is required as a cofactor.

It localises to the cytoplasm. The enzyme catalyses cytidine(32) in tRNA + S-sulfanyl-L-cysteinyl-[cysteine desulfurase] + AH2 + ATP = 2-thiocytidine(32) in tRNA + L-cysteinyl-[cysteine desulfurase] + A + AMP + diphosphate + H(+). Its pathway is tRNA modification. Functionally, catalyzes the ATP-dependent 2-thiolation of cytidine in position 32 of tRNA, to form 2-thiocytidine (s(2)C32). The sulfur atoms are provided by the cysteine/cysteine desulfurase (IscS) system. This chain is tRNA-cytidine(32) 2-sulfurtransferase, found in Salmonella paratyphi B (strain ATCC BAA-1250 / SPB7).